A 292-amino-acid polypeptide reads, in one-letter code: Protease HtpX homolog (292 aa).

The next 2 membrane-spanning stretches (helical) occupy residues 4 to 24 and 38 to 58; these read IALF…VASL and LGAL…ISLL. Histidine 144 contacts Zn(2+). The active site involves glutamate 145. Histidine 148 contacts Zn(2+). Helical transmembrane passes span 152 to 172 and 199 to 219; these read GDMV…VFLS and ITTI…VAWF. A Zn(2+)-binding site is contributed by glutamate 224.

This sequence belongs to the peptidase M48B family. Zn(2+) is required as a cofactor.

The protein resides in the cell inner membrane. This Acidovorax ebreus (strain TPSY) (Diaphorobacter sp. (strain TPSY)) protein is Protease HtpX homolog.